Consider the following 366-residue polypeptide: tRNA-specific 2-thiouridylase MnmA (366 aa).

ATP contacts are provided by residues 12–19 (GMSGGVDS) and Met38. Residues 98-100 (NPD) form an interaction with target base in tRNA region. The Nucleophile role is filled by Cys103. Cys103 and Cys200 form a disulfide bridge. Gly128 contributes to the ATP binding site. The interval 150 to 152 (KDQ) is interaction with tRNA. Cys200 acts as the Cysteine persulfide intermediate in catalysis. The interaction with tRNA stretch occupies residues 312–313 (RY).

Belongs to the MnmA/TRMU family.

It is found in the cytoplasm. It carries out the reaction S-sulfanyl-L-cysteinyl-[protein] + uridine(34) in tRNA + AH2 + ATP = 2-thiouridine(34) in tRNA + L-cysteinyl-[protein] + A + AMP + diphosphate + H(+). Functionally, catalyzes the 2-thiolation of uridine at the wobble position (U34) of tRNA, leading to the formation of s(2)U34. The sequence is that of tRNA-specific 2-thiouridylase MnmA from Pseudoalteromonas translucida (strain TAC 125).